The chain runs to 702 residues: Elongation factor G (702 aa).

In terms of domain architecture, tr-type G spans 8–290; that stretch reads ERYRNIGISA…AVIDYLPSPV (283 aa). Residues 17–24, 88–92, and 142–145 each bind GTP; these read AHIDAGKT, DTPGH, and NKMD.

It belongs to the TRAFAC class translation factor GTPase superfamily. Classic translation factor GTPase family. EF-G/EF-2 subfamily.

Its subcellular location is the cytoplasm. In terms of biological role, catalyzes the GTP-dependent ribosomal translocation step during translation elongation. During this step, the ribosome changes from the pre-translocational (PRE) to the post-translocational (POST) state as the newly formed A-site-bound peptidyl-tRNA and P-site-bound deacylated tRNA move to the P and E sites, respectively. Catalyzes the coordinated movement of the two tRNA molecules, the mRNA and conformational changes in the ribosome. This chain is Elongation factor G, found in Acidovorax ebreus (strain TPSY) (Diaphorobacter sp. (strain TPSY)).